Here is a 264-residue protein sequence, read N- to C-terminus: Thiazole synthase (264 aa).

Catalysis depends on lysine 106, which acts as the Schiff-base intermediate with DXP. Residues glycine 167, alanine 193–glycine 194, and asparagine 215–serine 216 each bind 1-deoxy-D-xylulose 5-phosphate.

The protein belongs to the ThiG family. In terms of assembly, homotetramer. Forms heterodimers with either ThiH or ThiS.

It localises to the cytoplasm. It catalyses the reaction [ThiS sulfur-carrier protein]-C-terminal-Gly-aminoethanethioate + 2-iminoacetate + 1-deoxy-D-xylulose 5-phosphate = [ThiS sulfur-carrier protein]-C-terminal Gly-Gly + 2-[(2R,5Z)-2-carboxy-4-methylthiazol-5(2H)-ylidene]ethyl phosphate + 2 H2O + H(+). The protein operates within cofactor biosynthesis; thiamine diphosphate biosynthesis. In terms of biological role, catalyzes the rearrangement of 1-deoxy-D-xylulose 5-phosphate (DXP) to produce the thiazole phosphate moiety of thiamine. Sulfur is provided by the thiocarboxylate moiety of the carrier protein ThiS. In vitro, sulfur can be provided by H(2)S. This Prochlorococcus marinus (strain MIT 9301) protein is Thiazole synthase.